Consider the following 437-residue polypeptide: Ribulose bisphosphate carboxylase/oxygenase activase, chloroplastic (437 aa).

Residues Met-1 to Ser-10 show a composition bias toward polar residues. The disordered stretch occupies residues Met-1–Ser-26. ATP is bound at residue Gly-165–Ser-172.

This sequence belongs to the RuBisCO activase family.

It localises to the plastid. The protein resides in the chloroplast stroma. Activation of RuBisCO (ribulose-1,5-bisphosphate carboxylase/oxygenase; EC 4.1.1.39) involves the ATP-dependent carboxylation of the epsilon-amino group of lysine leading to a carbamate structure. The polypeptide is Ribulose bisphosphate carboxylase/oxygenase activase, chloroplastic (RCA) (Malus domestica (Apple)).